Consider the following 106-residue polypeptide: UPF0145 protein Csac_0771 (106 aa).

This sequence belongs to the UPF0145 family.

The polypeptide is UPF0145 protein Csac_0771 (Caldicellulosiruptor saccharolyticus (strain ATCC 43494 / DSM 8903 / Tp8T 6331)).